The primary structure comprises 595 residues: MKTYPKIGIRPTIDGRQGGVRESLEEKAMKMAQAAKKLIENSLYYADGTPVQCVLASRTIGGSGDAGIVQQEFTGKNIVATLSVTPSWCYGTETMDLDPNTIKAIWGFNGTERPGAVYLAAAMSGYAQKGIPAFKIYGHDVQELDDDTIPVDVQEKILSFARGAIAVGQMKGKSYVNIGASSMGIAGSQVDISFFEDYLGMLVEFVDMTEILRRIHLEIFDPIEYDKALNWIKENCREGIDINEGKDLPDIVKKSKVIPADKDWEFIAKQAIIIRDILYRNEKLGDLGWEEEARGRNAIAGGFQGQRQWTDWLPNGDFTEAIMASTFDWNGPRQVTAFATENDTLNGVSMLLGTLLTNKAPIFSDVRTYWSPESVKRVTGKELTGKAKNGIIHLINSGASALDGTAAAKDKDGNKTMKEFWNMTNEDVQSCLKATDWCRANYEYFRGGGFSSHFKTEAELPVTLIRVNLIKGIGPTLQIAEGYTCVIDEDIHQILDERTDKTWPTTWFAPNLGECGFETVYDVMNHWGANHGAFVHGHIGSDLITLASMLRIPVTLHNVPRERIFRPNIFEGAGTKALETADFEICRLLGPLYKK.

Residues Glu-341 and Asp-365 each act as proton acceptor in the active site. Mn(2+) is bound by residues Glu-341, Asp-365, and His-531.

It belongs to the L-fucose isomerase family. Mn(2+) serves as cofactor.

The protein resides in the cytoplasm. The catalysed reaction is L-fucose = L-fuculose. It functions in the pathway carbohydrate degradation; L-fucose degradation; L-lactaldehyde and glycerone phosphate from L-fucose: step 1/3. Functionally, converts the aldose L-fucose into the corresponding ketose L-fuculose. This is L-fucose isomerase from Clostridium perfringens (strain 13 / Type A).